The following is a 250-amino-acid chain: Ribosomal RNA small subunit methyltransferase J (250 aa).

S-adenosyl-L-methionine-binding positions include 101-102 (RD), 117-118 (ER), 153-154 (SS), and aspartate 171.

It belongs to the methyltransferase superfamily. RsmJ family.

The protein resides in the cytoplasm. The enzyme catalyses guanosine(1516) in 16S rRNA + S-adenosyl-L-methionine = N(2)-methylguanosine(1516) in 16S rRNA + S-adenosyl-L-homocysteine + H(+). In terms of biological role, specifically methylates the guanosine in position 1516 of 16S rRNA. The protein is Ribosomal RNA small subunit methyltransferase J of Escherichia fergusonii (strain ATCC 35469 / DSM 13698 / CCUG 18766 / IAM 14443 / JCM 21226 / LMG 7866 / NBRC 102419 / NCTC 12128 / CDC 0568-73).